We begin with the raw amino-acid sequence, 283 residues long: ATP phosphoribosyltransferase (283 aa).

It belongs to the ATP phosphoribosyltransferase family. Long subfamily. It depends on Mg(2+) as a cofactor.

The protein localises to the cytoplasm. The catalysed reaction is 1-(5-phospho-beta-D-ribosyl)-ATP + diphosphate = 5-phospho-alpha-D-ribose 1-diphosphate + ATP. The protein operates within amino-acid biosynthesis; L-histidine biosynthesis; L-histidine from 5-phospho-alpha-D-ribose 1-diphosphate: step 1/9. With respect to regulation, feedback inhibited by histidine. Its function is as follows. Catalyzes the condensation of ATP and 5-phosphoribose 1-diphosphate to form N'-(5'-phosphoribosyl)-ATP (PR-ATP). Has a crucial role in the pathway because the rate of histidine biosynthesis seems to be controlled primarily by regulation of HisG enzymatic activity. The polypeptide is ATP phosphoribosyltransferase (Ignicoccus hospitalis (strain KIN4/I / DSM 18386 / JCM 14125)).